Consider the following 372-residue polypeptide: Saccharopine dehydrogenase [NAD(+), L-lysine-forming] (372 aa).

Arg18 and Lys77 together coordinate L-saccharopine. Lys77 acts as the Proton acceptor in catalysis. His95 serves as the catalytic Proton donor. Gln100 contacts L-saccharopine. Position 129 (Arg129) interacts with NAD(+). L-saccharopine contacts are provided by Arg130 and Phe134. NAD(+) is bound by residues 200–201, Asp224, Thr228, Tyr248, and Val275; that span reads GR. A disulfide bond links Cys202 and Cys246. 276–278 is an L-saccharopine binding site; sequence SAD. Residue 316–319 coordinates NAD(+); that stretch reads IDHL.

The protein belongs to the AlaDH/PNT family. In terms of assembly, monomer.

The catalysed reaction is L-saccharopine + NAD(+) + H2O = L-lysine + 2-oxoglutarate + NADH + H(+). It participates in amino-acid biosynthesis; L-lysine biosynthesis via AAA pathway; L-lysine from L-alpha-aminoadipate (fungal route): step 3/3. Functionally, catalyzes the NAD(+)-dependent cleavage of saccharopine to L-lysine and 2-oxoglutarate, the final step in the alpha-aminoadipate (AAA) pathway for lysin biosynthesis. This is Saccharopine dehydrogenase [NAD(+), L-lysine-forming] (lys-4) from Neurospora crassa (strain ATCC 24698 / 74-OR23-1A / CBS 708.71 / DSM 1257 / FGSC 987).